Consider the following 105-residue polypeptide: Protein E7 (105 aa).

Residues 1 to 45 (MHGKVPTLQDVVLELTPQTEIDLQCNEQLDSSEDEDEDEVDHLQE) are E7 terminal domain. An LXCXE motif; interaction with host RB1 and TMEM173/STING motif is present at residues 23-27 (LQCNE). A disordered region spans residues 29–48 (LDSSEDEDEDEVDHLQERPQ). Over residues 30–40 (DSSEDEDEDEV) the composition is skewed to acidic residues. The segment at 65 to 101 (CCECKFVVQLDIQSTKEDLRVVQQLLMGALTVTCPLC) is a zinc-finger region. The Nuclear export signal signature appears at 83 to 91 (LRVVQQLLM).

The protein belongs to the papillomaviridae E7 protein family. In terms of assembly, homodimer. Homooligomer. Interacts with host RB1; this interaction induces dissociation of RB1-E2F1 complex thereby disrupting RB1 activity. Interacts with host EP300; this interaction represses EP300 transcriptional activity. Interacts with protein E2; this interaction inhibits E7 oncogenic activity. Interacts with host TMEM173/STING; this interaction impairs the ability of TMEM173/STING to sense cytosolic DNA and promote the production of type I interferon (IFN-alpha and IFN-beta). Highly phosphorylated.

Its subcellular location is the host cytoplasm. The protein localises to the host nucleus. Its function is as follows. Plays a role in viral genome replication by driving entry of quiescent cells into the cell cycle. Stimulation of progression from G1 to S phase allows the virus to efficiently use the cellular DNA replicating machinery to achieve viral genome replication. E7 protein has both transforming and trans-activating activities. Induces the disassembly of the E2F1 transcription factor from RB1, with subsequent transcriptional activation of E2F1-regulated S-phase genes. Interferes with host histone deacetylation mediated by HDAC1 and HDAC2, leading to transcription activation. Also plays a role in the inhibition of both antiviral and antiproliferative functions of host interferon alpha. Interaction with host TMEM173/STING impairs the ability of TMEM173/STING to sense cytosolic DNA and promote the production of type I interferon (IFN-alpha and IFN-beta). This Human papillomavirus 56 protein is Protein E7.